Reading from the N-terminus, the 1158-residue chain is Serine/threonine/tyrosine-interacting-like protein 2 (1158 aa).

Disordered stretches follow at residues 1–21 (MATRKDTEEEQVVPSEEDEAN), 280–303 (EEREEDYGREGGSAEAEEGEGTGS), 315–337 (EEEDDSASHLSGSSLGKATQASK), 360–392 (LLSDKVPQDGGGWRSASSGQGGEELEDEDVERI), 407–444 (GYRRWGREEEKEEESDAGSSVGRRRRTLSESSAWESVS), 492–527 (SRRYHAKSKREEAADRSSEAGSRVREDDEDSVGSEA), 559–582 (KDLGAGDSSGEPGAEEAVGEKNPS), 597–622 (QKKVGSENKEEVVELSKGEDSALAKK), 873–915 (KVKE…CSSL), and 940–1135 (SGLR…MDDE). A compositionally biased stretch (acidic residues) spans 8–19 (EEEQVVPSEEDE). The 149-residue stretch at 132–280 (NEVDEVWPNV…LRELNEKLME (149 aa)) folds into the Tyrosine-protein phosphatase domain. Positions 322–337 (SHLSGSSLGKATQASK) are enriched in polar residues. Phosphoserine is present on serine 377. The residue at position 433 (threonine 433) is a Phosphothreonine. Residues 435–444 (SESSAWESVS) show a composition bias toward low complexity. The segment covering 500–517 (KREEAADRSSEAGSRVRE) has biased composition (basic and acidic residues). Phosphoserine is present on serine 509. Over residues 600–619 (VGSENKEEVVELSKGEDSAL) the composition is skewed to basic and acidic residues. Over residues 877–890 (DEDDGVGDGDEDTD) the composition is skewed to acidic residues. 2 stretches are compositionally biased toward polar residues: residues 897–914 (RYSSRSNSQKPETDTCSS) and 952–966 (SDWSGSSRGKYTRSS). Residues 974–983 (KSSSYKFSKS) are compositionally biased toward low complexity. The residue at position 985 (serine 985) is a Phosphoserine. A compositionally biased stretch (polar residues) spans 990–999 (TSSYHEANGN). A compositionally biased stretch (low complexity) spans 1000 to 1012 (SVRSTSRFSSSST). Serine 1036 is subject to Phosphoserine. 3 stretches are compositionally biased toward basic and acidic residues: residues 1044–1056 (RTPESSEREESPE), 1064–1079 (RSRDWEDVEESSKSDF), and 1094–1111 (RSEEEGEKERTENREEGR). Over residues 1126–1135 (REEEEEMDDE) the composition is skewed to acidic residues.

Belongs to the protein-tyrosine phosphatase family. Non-receptor class dual specificity subfamily.

The protein localises to the cytoplasm. Its subcellular location is the myofibril. It is found in the sarcomere. In terms of biological role, may be required for myofiber maturation. This is Serine/threonine/tyrosine-interacting-like protein 2 from Homo sapiens (Human).